A 208-amino-acid polypeptide reads, in one-letter code: Glutathione S-transferase 1-1 (208 aa).

A GST N-terminal domain is found at 1–80 (MDFYYLPGSA…YLVEKYGKND (80 aa)). Residues serine 9, 50 to 52 (HTI), and 64 to 66 (ESR) each bind glutathione. Positions 86-207 (CPKKRAVINQ…EGCLEFKKFF (122 aa)) constitute a GST C-terminal domain.

Belongs to the GST superfamily. Theta family. Homodimer.

The enzyme catalyses RX + glutathione = an S-substituted glutathione + a halide anion + H(+). Conjugation of reduced glutathione to a wide number of exogenous and endogenous hydrophobic electrophiles. The sequence is that of Glutathione S-transferase 1-1 (GST1) from Lucilia cuprina (Green bottle fly).